A 517-amino-acid polypeptide reads, in one-letter code: Enantioselective amidase (517 aa).

Catalysis depends on charge relay system residues K96 and S173. Residue S197 is the Acyl-ester intermediate of the active site.

The protein belongs to the amidase family. Homooctamer.

The catalysed reaction is a monocarboxylic acid amide + H2O = a monocarboxylate + NH4(+). The protein is Enantioselective amidase (amdA) of Rhodococcus rhodochrous.